The following is a 280-amino-acid chain: Ribosomal RNA small subunit methyltransferase A (280 aa).

6 residues coordinate S-adenosyl-L-methionine: asparagine 11, leucine 13, glycine 37, glutamate 57, aspartate 85, and asparagine 106.

This sequence belongs to the class I-like SAM-binding methyltransferase superfamily. rRNA adenine N(6)-methyltransferase family. RsmA subfamily.

It localises to the cytoplasm. It carries out the reaction adenosine(1518)/adenosine(1519) in 16S rRNA + 4 S-adenosyl-L-methionine = N(6)-dimethyladenosine(1518)/N(6)-dimethyladenosine(1519) in 16S rRNA + 4 S-adenosyl-L-homocysteine + 4 H(+). In terms of biological role, specifically dimethylates two adjacent adenosines (A1518 and A1519) in the loop of a conserved hairpin near the 3'-end of 16S rRNA in the 30S particle. May play a critical role in biogenesis of 30S subunits. The sequence is that of Ribosomal RNA small subunit methyltransferase A from Campylobacter concisus (strain 13826).